The following is a 260-amino-acid chain: Putative nudix hydrolase 6 (260 aa).

One can recognise a Nudix hydrolase domain in the interval 113–257; it reads PNHAADPIVS…SHFIDLLKES (145 aa). Positions 148–170 match the Nudix box motif; the sequence is GMVDAGEHVSQTLRREFAEEAMH. Residues glutamate 163 and glutamate 167 each contribute to the Mg(2+) site.

Belongs to the Nudix hydrolase family. It depends on Mg(2+) as a cofactor. Mn(2+) serves as cofactor.

In terms of biological role, probably mediates the hydrolysis of some nucleoside diphosphate derivatives. This is Putative nudix hydrolase 6 (ndx-6) from Caenorhabditis elegans.